Here is a 174-residue protein sequence, read N- to C-terminus: Crossover junction endodeoxyribonuclease RuvC (174 aa).

Active-site residues include Asp-8, Glu-67, and Asp-139. Asp-8, Glu-67, and Asp-139 together coordinate Mg(2+).

This sequence belongs to the RuvC family. As to quaternary structure, homodimer which binds Holliday junction (HJ) DNA. The HJ becomes 2-fold symmetrical on binding to RuvC with unstacked arms; it has a different conformation from HJ DNA in complex with RuvA. In the full resolvosome a probable DNA-RuvA(4)-RuvB(12)-RuvC(2) complex forms which resolves the HJ. The cofactor is Mg(2+).

It is found in the cytoplasm. The enzyme catalyses Endonucleolytic cleavage at a junction such as a reciprocal single-stranded crossover between two homologous DNA duplexes (Holliday junction).. Functionally, the RuvA-RuvB-RuvC complex processes Holliday junction (HJ) DNA during genetic recombination and DNA repair. Endonuclease that resolves HJ intermediates. Cleaves cruciform DNA by making single-stranded nicks across the HJ at symmetrical positions within the homologous arms, yielding a 5'-phosphate and a 3'-hydroxyl group; requires a central core of homology in the junction. The consensus cleavage sequence is 5'-(A/T)TT(C/G)-3'. Cleavage occurs on the 3'-side of the TT dinucleotide at the point of strand exchange. HJ branch migration catalyzed by RuvA-RuvB allows RuvC to scan DNA until it finds its consensus sequence, where it cleaves and resolves the cruciform DNA. The protein is Crossover junction endodeoxyribonuclease RuvC of Ectopseudomonas mendocina (strain ymp) (Pseudomonas mendocina).